The chain runs to 347 residues: Phosphate acyltransferase (347 aa).

Belongs to the PlsX family. As to quaternary structure, homodimer. Probably interacts with PlsY.

Its subcellular location is the cytoplasm. It catalyses the reaction a fatty acyl-[ACP] + phosphate = an acyl phosphate + holo-[ACP]. It participates in lipid metabolism; phospholipid metabolism. Its function is as follows. Catalyzes the reversible formation of acyl-phosphate (acyl-PO(4)) from acyl-[acyl-carrier-protein] (acyl-ACP). This enzyme utilizes acyl-ACP as fatty acyl donor, but not acyl-CoA. The sequence is that of Phosphate acyltransferase from Rhizobium meliloti (strain 1021) (Ensifer meliloti).